We begin with the raw amino-acid sequence, 186 residues long: Large ribosomal subunit protein uL5c (186 aa).

It belongs to the universal ribosomal protein uL5 family. As to quaternary structure, part of the 50S ribosomal subunit; contacts the 5S rRNA.

The protein localises to the plastid. The protein resides in the chloroplast. Its function is as follows. Binds 5S rRNA, forms part of the central protuberance of the 50S subunit. The sequence is that of Large ribosomal subunit protein uL5c (rpl5) from Chaetosphaeridium globosum (Charophycean green alga).